The following is a 259-amino-acid chain: Indole-3-glycerol phosphate synthase (259 aa).

It belongs to the TrpC family.

It carries out the reaction 1-(2-carboxyphenylamino)-1-deoxy-D-ribulose 5-phosphate + H(+) = (1S,2R)-1-C-(indol-3-yl)glycerol 3-phosphate + CO2 + H2O. It functions in the pathway amino-acid biosynthesis; L-tryptophan biosynthesis; L-tryptophan from chorismate: step 4/5. The sequence is that of Indole-3-glycerol phosphate synthase from Rhodopirellula baltica (strain DSM 10527 / NCIMB 13988 / SH1).